The sequence spans 240 residues: uncharacterized protein (240 aa).

The N-terminal stretch at 1 to 18 is a signal peptide; sequence MTRYTYLFILQIISCSFA. An N-linked (GlcNAc...) asparagine glycan is attached at asparagine 127. A helical membrane pass occupies residues 215–235; the sequence is GFISSSQLPQFVYLIVFTIIG.

It is found in the membrane. This is an uncharacterized protein from Caenorhabditis elegans.